The primary structure comprises 99 residues: Protein MOST-1 (99 aa).

In terms of assembly, interacts with TSPO, IGHM and IGHD. As to expression, expressed in the heart, kidney, liver, pancreas, small intestine, ovary, testis, prostate and thymus. Expressed in all of the cancer cell lines tested.

The protein localises to the cytoplasm. Its subcellular location is the microsome membrane. It is found in the endoplasmic reticulum membrane. Its function is as follows. May be involved in cell survival, proliferation and progression of cancer cells. This chain is Protein MOST-1 (C8orf17), found in Homo sapiens (Human).